The chain runs to 191 residues: Chromobox protein homolog 5 (191 aa).

4 positions are modified to phosphoserine: serine 11, serine 12, serine 13, and serine 14. The 59-residue stretch at 20-78 folds into the Chromo 1 domain; it reads YVVEKVLDRRVVKGQVEYLLKWKGFSEEHNTWEPEKNLDCPELISEFMKKYKKMKEGEN. Lysine 32 is covalently cross-linked (Glycyl lysine isopeptide (Lys-Gly) (interchain with G-Cter in SUMO2)). At lysine 40 the chain carries N6-acetyllysine. The disordered stretch occupies residues 70 to 117; the sequence is YKKMKEGENNKPREKSESNKRKSNFSNSADDIKSKKKREQSNDIARGF. Basic and acidic residues predominate over residues 73-89; it reads MKEGENNKPREKSESNK. A Glycyl lysine isopeptide (Lys-Gly) (interchain with G-Cter in SUMO2) cross-link involves residue lysine 91. A phosphoserine mark is found at serine 92, serine 95, and serine 97. Glycyl lysine isopeptide (Lys-Gly) (interchain with G-Cter in SUMO2) cross-links involve residues lysine 102, lysine 106, lysine 154, and lysine 184. The Chromo 2; shadow subtype domain maps to 121-179; the sequence is LEPEKIIGATDSCGDLMFLMKWKDTDEADLVLAKEANVKCPQIVIAFYEERLTWHAYPE.

In terms of assembly, homodimer. Interacts with histone H3 methylated at 'Lys-9'. Interacts (via Chromo 2; shadow subtype domain) with the MIS12 complex subunit NSL1; the interaction is direct, involves dimeric CBX5, and occurs during interphase. Interacts with POGZ; POGZ and PXVXL motif-containing proteins such as INCENP and TRIM28 compete for interaction with CBX5. Interacts with LRIF1 (via PxVxL motif). Interacts with INCENP. Interacts with TRIM24. Interacts (via the chromoshadow domain) with ATRX; the interaction is direct. Interacts (via the chromoshadow domain) with CHAF1A; the interaction is direct. Interacts (via the chromoshadow domain) with LBR; the interaction is direct. Interacts (via the chromoshadow domain) with NIPBL; the interaction is direct. Interacts (via the chromoshadow domain) with SP100; the interaction is direct. Interacts (via the chromoshadow domain) with STAM2; the interaction is direct. Interacts (via the chromoshadow domain) with TRIM28; the interaction is direct. Interacts (via the chromoshadow domain) with CBX3; the interaction is direct. Interacts with PRR14 (via N-terminus). Interacts with RRP1B. Interacts with HNRNPU (via C-terminus); this interaction is, at least in part, RNA-dependent. Interacts with ZNF263; recruited to the SIX3 promoter along with other proteins involved in chromatin modification and transcriptional corepression where it contributes to transcriptional repression. Interacts with AURKB during mitosis. Interacts with CHAMP1. Interacts with BAHD1. Interacts with HP1BP3. Interacts with CHD3. Interacts with CHD4. Interacts with SMYD5. Interacts with KMT5B. Interacts with KMT5C. (Microbial infection) Interacts with JC virus agnoprotein; this interaction induces the dissociation of CBX5 from LBR, resulting in destabilization of the nuclear envelope. In terms of processing, phosphorylation of HP1 and LBR may be responsible for some of the alterations in chromatin organization and nuclear structure which occur at various times during the cell cycle. Phosphorylated during interphase and possibly hyper-phosphorylated during mitosis. Post-translationally, ubiquitinated.

The protein localises to the nucleus. The protein resides in the chromosome. Its subcellular location is the centromere. In terms of biological role, component of heterochromatin that recognizes and binds histone H3 tails methylated at 'Lys-9' (H3K9me), leading to epigenetic repression. In contrast, it is excluded from chromatin when 'Tyr-41' of histone H3 is phosphorylated (H3Y41ph). May contribute to the association of heterochromatin with the inner nuclear membrane by interactions with the lamin-B receptor (LBR). Involved in the formation of kinetochore through interaction with the MIS12 complex subunit NSL1. Required for the formation of the inner centromere. In Homo sapiens (Human), this protein is Chromobox protein homolog 5 (CBX5).